A 63-amino-acid polypeptide reads, in one-letter code: MIVDNLKNLILSKNSNQGVTPNASIGFRSNKYGSNIVCESDSIQIKATPTITFTYTKPGYNKT.

This is an uncharacterized protein from Dictyostelium discoideum (Social amoeba).